The primary structure comprises 234 residues: Phosphoribosylaminoimidazole-succinocarboxamide synthase (234 aa).

Belongs to the SAICAR synthetase family.

It catalyses the reaction 5-amino-1-(5-phospho-D-ribosyl)imidazole-4-carboxylate + L-aspartate + ATP = (2S)-2-[5-amino-1-(5-phospho-beta-D-ribosyl)imidazole-4-carboxamido]succinate + ADP + phosphate + 2 H(+). Its pathway is purine metabolism; IMP biosynthesis via de novo pathway; 5-amino-1-(5-phospho-D-ribosyl)imidazole-4-carboxamide from 5-amino-1-(5-phospho-D-ribosyl)imidazole-4-carboxylate: step 1/2. The polypeptide is Phosphoribosylaminoimidazole-succinocarboxamide synthase (Staphylococcus aureus (strain MRSA252)).